A 311-amino-acid polypeptide reads, in one-letter code: Ribonuclease 3 (311 aa).

An RNase III domain is found at 20–145 (YLCFYRILGF…FIGAIYLDQG (126 aa)). Glu-62 provides a ligand contact to Mg(2+). The active site involves Asp-66. The Mg(2+) site is built by Asn-131 and Glu-134. Glu-134 is an active-site residue. The DRBM domain occupies 173–242 (NFKSKLIEWS…AQMAIKKVKD (70 aa)). The tract at residues 250–311 (NEAKSQHSKP…EVEATETEKE (62 aa)) is disordered. Acidic residues predominate over residues 262-288 (VETESVEPELTESETMEPDTLETEAPE).

Belongs to the ribonuclease III family. In terms of assembly, homodimer. Mg(2+) is required as a cofactor.

Its subcellular location is the cytoplasm. The enzyme catalyses Endonucleolytic cleavage to 5'-phosphomonoester.. Its function is as follows. Digests double-stranded RNA. Involved in the processing of primary rRNA transcript to yield the immediate precursors to the large and small rRNAs (23S and 16S). Processes some mRNAs, and tRNAs when they are encoded in the rRNA operon. Processes pre-crRNA and tracrRNA of type II CRISPR loci if present in the organism. This is Ribonuclease 3 from Bacteroides thetaiotaomicron (strain ATCC 29148 / DSM 2079 / JCM 5827 / CCUG 10774 / NCTC 10582 / VPI-5482 / E50).